We begin with the raw amino-acid sequence, 251 residues long: Ubiquinone/menaquinone biosynthesis C-methyltransferase UbiE (251 aa).

S-adenosyl-L-methionine contacts are provided by residues Thr-74, Asp-95, and 123–124 (NA).

It belongs to the class I-like SAM-binding methyltransferase superfamily. MenG/UbiE family.

It carries out the reaction a 2-demethylmenaquinol + S-adenosyl-L-methionine = a menaquinol + S-adenosyl-L-homocysteine + H(+). The enzyme catalyses a 2-methoxy-6-(all-trans-polyprenyl)benzene-1,4-diol + S-adenosyl-L-methionine = a 5-methoxy-2-methyl-3-(all-trans-polyprenyl)benzene-1,4-diol + S-adenosyl-L-homocysteine + H(+). Its pathway is quinol/quinone metabolism; menaquinone biosynthesis; menaquinol from 1,4-dihydroxy-2-naphthoate: step 2/2. It functions in the pathway cofactor biosynthesis; ubiquinone biosynthesis. Functionally, methyltransferase required for the conversion of demethylmenaquinol (DMKH2) to menaquinol (MKH2) and the conversion of 2-polyprenyl-6-methoxy-1,4-benzoquinol (DDMQH2) to 2-polyprenyl-3-methyl-6-methoxy-1,4-benzoquinol (DMQH2). This is Ubiquinone/menaquinone biosynthesis C-methyltransferase UbiE from Psychromonas ingrahamii (strain DSM 17664 / CCUG 51855 / 37).